We begin with the raw amino-acid sequence, 109 residues long: Probable glutaredoxin slr1562 (109 aa).

One can recognise a Glutaredoxin domain in the interval 11 to 109 (LSGRQADGIK…PLLATPPNPA (99 aa)). Cys-31 and Cys-34 are disulfide-bonded.

This sequence belongs to the glutaredoxin family.

In terms of biological role, has a glutathione-disulfide oxidoreductase activity in the presence of NADPH and glutathione reductase. Reduces low molecular weight disulfides and proteins. The sequence is that of Probable glutaredoxin slr1562 from Synechocystis sp. (strain ATCC 27184 / PCC 6803 / Kazusa).